Consider the following 348-residue polypeptide: VIP36-like protein (348 aa).

Positions 1-38 (MAATLGPLGSWQQWRRCLLARDGSRMLLLLLLLGSGQG) are cleaved as a signal peptide. Over 39-313 (PQQVGAGQTF…APLPPLSGLA (275 aa)) the chain is Lumenal. An L-type lectin-like domain is found at 49–274 (EYLKREHSLS…DVISLKLFEL (226 aa)). Residues Ser93 and Asp128 each contribute to the a carbohydrate site. 3 residues coordinate Ca(2+): Asp159, Tyr161, and Asn163. An a carbohydrate-binding site is contributed by 161–163 (YPN). Asn181 carries an N-linked (GlcNAc...) asparagine glycan. His188 is a binding site for a carbohydrate. Residue Asp191 coordinates Ca(2+). Cysteines 200 and 237 form a disulfide. Position 258 to 260 (258 to 260 (GDL)) interacts with a carbohydrate. The helical transmembrane segment at 314 to 334 (LFHIVFFSLVIFVFAIVIGII) threads the bilayer. The Cytoplasmic segment spans residues 335–348 (LYNKWQEQSRKRFY). The Endoplasmic reticulum retention signal motif lies at 344-346 (RKR).

The protein localises to the endoplasmic reticulum membrane. It localises to the golgi apparatus membrane. Its function is as follows. May be involved in the regulation of export from the endoplasmic reticulum of a subset of glycoproteins. May function as a regulator of ERGIC-53. This chain is VIP36-like protein (LMAN2L), found in Pongo abelii (Sumatran orangutan).